A 475-amino-acid polypeptide reads, in one-letter code: Bifunctional protein HldE (475 aa).

A ribokinase region spans residues Met-1–Thr-318. Residue Asn-195 to Glu-198 coordinates ATP. The active site involves Asp-264. Residues Met-344–Gly-475 are cytidylyltransferase.

This sequence in the N-terminal section; belongs to the carbohydrate kinase PfkB family. It in the C-terminal section; belongs to the cytidylyltransferase family. As to quaternary structure, homodimer.

The catalysed reaction is D-glycero-beta-D-manno-heptose 7-phosphate + ATP = D-glycero-beta-D-manno-heptose 1,7-bisphosphate + ADP + H(+). The enzyme catalyses D-glycero-beta-D-manno-heptose 1-phosphate + ATP + H(+) = ADP-D-glycero-beta-D-manno-heptose + diphosphate. It participates in nucleotide-sugar biosynthesis; ADP-L-glycero-beta-D-manno-heptose biosynthesis; ADP-L-glycero-beta-D-manno-heptose from D-glycero-beta-D-manno-heptose 7-phosphate: step 1/4. The protein operates within nucleotide-sugar biosynthesis; ADP-L-glycero-beta-D-manno-heptose biosynthesis; ADP-L-glycero-beta-D-manno-heptose from D-glycero-beta-D-manno-heptose 7-phosphate: step 3/4. Its function is as follows. Catalyzes the phosphorylation of D-glycero-D-manno-heptose 7-phosphate at the C-1 position to selectively form D-glycero-beta-D-manno-heptose-1,7-bisphosphate. Catalyzes the ADP transfer from ATP to D-glycero-beta-D-manno-heptose 1-phosphate, yielding ADP-D-glycero-beta-D-manno-heptose. The sequence is that of Bifunctional protein HldE from Aeromonas hydrophila subsp. hydrophila (strain ATCC 7966 / DSM 30187 / BCRC 13018 / CCUG 14551 / JCM 1027 / KCTC 2358 / NCIMB 9240 / NCTC 8049).